The sequence spans 200 residues: UPF0301 protein BOV_0485 (200 aa).

This sequence belongs to the UPF0301 (AlgH) family.

The sequence is that of UPF0301 protein BOV_0485 from Brucella ovis (strain ATCC 25840 / 63/290 / NCTC 10512).